The sequence spans 919 residues: Kinesin-like protein KIN-6 (919 aa).

Residues Met-1–Pro-59 form a disordered region. Over residues Gly-28–Arg-45 the composition is skewed to low complexity. Pro residues predominate over residues Ser-46–Asn-56. Residues Arg-72–Ile-415 form the Kinesin motor domain. Gly-171–Thr-178 lines the ATP pocket. 5 disordered regions span residues Glu-591 to Gly-615, Ser-674 to Asp-700, Ser-711 to Arg-730, Thr-737 to Ser-764, and Lys-886 to Gln-919. A compositionally biased stretch (basic and acidic residues) spans Ser-597 to Thr-612. Residues His-685–Ser-697 are compositionally biased toward low complexity. Residues Thr-755–Ser-764 show a composition bias toward polar residues. Residues Lys-886–Pro-912 show a composition bias toward basic and acidic residues.

The protein belongs to the TRAFAC class myosin-kinesin ATPase superfamily. Kinesin family. KIN-6 subfamily.

In Oryza sativa subsp. japonica (Rice), this protein is Kinesin-like protein KIN-6.